A 120-amino-acid chain; its full sequence is Glycine cleavage system H protein (120 aa).

In terms of domain architecture, Lipoyl-binding spans 17–99; sequence VATVGITEHA…QGAAWFFKLK (83 aa). Lys58 carries the post-translational modification N6-lipoyllysine.

It belongs to the GcvH family. The glycine cleavage system is composed of four proteins: P, T, L and H. It depends on (R)-lipoate as a cofactor.

Functionally, the glycine cleavage system catalyzes the degradation of glycine. The H protein shuttles the methylamine group of glycine from the P protein to the T protein. The polypeptide is Glycine cleavage system H protein (Sinorhizobium fredii (strain NBRC 101917 / NGR234)).